Here is a 223-residue protein sequence, read N- to C-terminus: Immediate early response gene 2 protein (223 aa).

Met1 is modified (N-acetylmethionine). The tract at residues 63–172 (AALPSDPRLH…PPAQAEGAFP (110 aa)) is disordered. Basic and acidic residues predominate over residues 69-78 (PRLHPPREAE). Over residues 125-138 (SSLSDGGDAGLVPS) the composition is skewed to low complexity.

This sequence belongs to the IER family. As to expression, expressed in activated T-cells (at protein level). Expression increases in metastatic tumor cells (at protein level).

The protein localises to the cytoplasm. It is found in the nucleus. In terms of biological role, DNA-binding protein that seems to act as a transcription factor. Involved in the regulation of neuronal differentiation, acts upon JNK-signaling pathway activation and plays a role in neurite outgrowth in hippocampal cells. May mediate with FIBP FGF-signaling in the establishment of laterality in the embryo. Promotes cell motility, seems to stimulate tumor metastasis. This chain is Immediate early response gene 2 protein, found in Homo sapiens (Human).